We begin with the raw amino-acid sequence, 101 residues long: Small ribosomal subunit protein uS14 (101 aa).

Belongs to the universal ribosomal protein uS14 family. Part of the 30S ribosomal subunit. Contacts proteins S3 and S10.

In terms of biological role, binds 16S rRNA, required for the assembly of 30S particles and may also be responsible for determining the conformation of the 16S rRNA at the A site. The protein is Small ribosomal subunit protein uS14 of Rhizorhabdus wittichii (strain DSM 6014 / CCUG 31198 / JCM 15750 / NBRC 105917 / EY 4224 / RW1) (Sphingomonas wittichii).